A 331-amino-acid polypeptide reads, in one-letter code: UPF0194 membrane protein CKO_02332 (331 aa).

The first 15 residues, 1-15 (MKKPVVIALAVAALA), serve as a signal peptide directing secretion. Residues 142–207 (ISANDLENAR…ELDLQDTTLI (66 aa)) adopt a coiled-coil conformation.

It belongs to the UPF0194 family.

Its subcellular location is the periplasm. The polypeptide is UPF0194 membrane protein CKO_02332 (Citrobacter koseri (strain ATCC BAA-895 / CDC 4225-83 / SGSC4696)).